The primary structure comprises 83 residues: Toxin Aam1 (83 aa).

The signal sequence occupies residues 1-19 (MNYLVMISLALLLMIGVES). The 62-residue stretch at 21–82 (RDGYIVYPHN…PIYDRSYKCY (62 aa)) folds into the LCN-type CS-alpha/beta domain. 4 disulfide bridges follow: Cys31–Cys81, Cys35–Cys53, Cys39–Cys63, and Cys43–Cys65.

The protein belongs to the long (4 C-C) scorpion toxin superfamily. Sodium channel inhibitor family. Alpha subfamily. The C-terminal basic residue is removed by a carboxypeptidase. In terms of tissue distribution, expressed by the venom gland.

Its subcellular location is the secreted. In terms of biological role, alpha toxins bind voltage-independently at site-3 of sodium channels (Nav) and inhibit the inactivation of the activated channels, thereby blocking neuronal transmission. The polypeptide is Toxin Aam1 (H1) (Androctonus amoreuxi (African fattail scorpion)).